Reading from the N-terminus, the 326-residue chain is NADH-quinone oxidoreductase subunit H (326 aa).

Helical transmembrane passes span 11–31, 81–101, 114–134, 154–174, 186–206, 237–257, 265–285, and 302–322; these read ILLS…CGAF, VIFT…FAIV, IGIL…LFAG, LSYE…AGSF, LWNV…GVAV, FFVG…TLFF, LPPF…FILI, and WKVC…VILW.

This sequence belongs to the complex I subunit 1 family. NDH-1 is composed of 13 different subunits. Subunits NuoA, H, J, K, L, M, N constitute the membrane sector of the complex.

The protein resides in the cell inner membrane. The enzyme catalyses a quinone + NADH + 5 H(+)(in) = a quinol + NAD(+) + 4 H(+)(out). Functionally, NDH-1 shuttles electrons from NADH, via FMN and iron-sulfur (Fe-S) centers, to quinones in the respiratory chain. The immediate electron acceptor for the enzyme in this species is believed to be ubiquinone. Couples the redox reaction to proton translocation (for every two electrons transferred, four hydrogen ions are translocated across the cytoplasmic membrane), and thus conserves the redox energy in a proton gradient. This subunit may bind ubiquinone. The chain is NADH-quinone oxidoreductase subunit H from Cronobacter sakazakii (strain ATCC BAA-894) (Enterobacter sakazakii).